Consider the following 170-residue polypeptide: Aspartate 1-decarboxylase (170 aa).

Serine 25 (schiff-base intermediate with substrate; via pyruvic acid) is an active-site residue. Serine 25 bears the Pyruvic acid (Ser) mark. Threonine 57 is a binding site for substrate. The active-site Proton donor is the tyrosine 58. 73 to 75 serves as a coordination point for substrate; the sequence is GAA. Residues 118-170 are disordered; the sequence is GHDPAEALPDDPSSLRGDLAVPGNPVTAAARRGTPTHQAPVALPASRTVVAPR.

The protein belongs to the PanD family. Heterooctamer of four alpha and four beta subunits. Pyruvate serves as cofactor. Is synthesized initially as an inactive proenzyme, which is activated by self-cleavage at a specific serine bond to produce a beta-subunit with a hydroxyl group at its C-terminus and an alpha-subunit with a pyruvoyl group at its N-terminus.

It is found in the cytoplasm. It catalyses the reaction L-aspartate + H(+) = beta-alanine + CO2. The protein operates within cofactor biosynthesis; (R)-pantothenate biosynthesis; beta-alanine from L-aspartate: step 1/1. Functionally, catalyzes the pyruvoyl-dependent decarboxylation of aspartate to produce beta-alanine. In Frankia alni (strain DSM 45986 / CECT 9034 / ACN14a), this protein is Aspartate 1-decarboxylase.